The primary structure comprises 649 residues: DNA mismatch repair protein MutL (649 aa).

Positions 339-414 (KKKTKDESVQ…VREEESWQST (76 aa)) are disordered. A compositionally biased stretch (basic and acidic residues) spans 342 to 360 (TKDESVQEQFHFEHTKPKE). Positions 388–402 (PQLWQQPKQEWQPPQ) are enriched in low complexity.

This sequence belongs to the DNA mismatch repair MutL/HexB family.

This protein is involved in the repair of mismatches in DNA. It is required for dam-dependent methyl-directed DNA mismatch repair. May act as a 'molecular matchmaker', a protein that promotes the formation of a stable complex between two or more DNA-binding proteins in an ATP-dependent manner without itself being part of a final effector complex. The sequence is that of DNA mismatch repair protein MutL from Bacillus cytotoxicus (strain DSM 22905 / CIP 110041 / 391-98 / NVH 391-98).